A 374-amino-acid polypeptide reads, in one-letter code: Cell division protein DivIB (374 aa).

Residues methionine 1–proline 90 are disordered. The Cytoplasmic portion of the chain corresponds to methionine 1–arginine 103. A compositionally biased stretch (basic and acidic residues) spans tyrosine 39–asparagine 53. Over residues alanine 56 to proline 75 the composition is skewed to polar residues. The helical transmembrane segment at leucine 104–proline 124 threads the bilayer. Over leucine 125–glutamate 374 the chain is Extracellular. In terms of domain architecture, POTRA spans serine 126–tyrosine 197. The disordered stretch occupies residues lysine 325–glutamate 374. The span at glutamate 326–alanine 339 shows a compositional bias: acidic residues. A compositionally biased stretch (polar residues) spans glycine 356 to glutamate 374.

This sequence belongs to the FtsQ/DivIB family. DivIB subfamily.

It localises to the cell membrane. Its function is as follows. Cell division protein that may be involved in stabilizing or promoting the assembly of the division complex. In Enterococcus faecalis (strain 62), this protein is Cell division protein DivIB.